A 156-amino-acid polypeptide reads, in one-letter code: MPRRRKVPKREILPDPKFGNVEVAKFMNVLMLDGKKSVAERIVYGAFDHIEKKANKEPLEIFSTAMGNVKPMVEVKSRRVGGANYQVPVEVRPSRRSALAMRWLREAAKKRGEKSMAQRLANELLEAAEGRGGAMKKREEVHRMAEANKAFSHFRF.

Belongs to the universal ribosomal protein uS7 family. Part of the 30S ribosomal subunit. Contacts proteins S9 and S11.

In terms of biological role, one of the primary rRNA binding proteins, it binds directly to 16S rRNA where it nucleates assembly of the head domain of the 30S subunit. Is located at the subunit interface close to the decoding center, probably blocks exit of the E-site tRNA. This is Small ribosomal subunit protein uS7 from Polynucleobacter necessarius subsp. necessarius (strain STIR1).